A 248-amino-acid chain; its full sequence is Probable transcriptional regulatory protein FTM_1203 (248 aa).

This sequence belongs to the TACO1 family.

The protein resides in the cytoplasm. This Francisella tularensis subsp. mediasiatica (strain FSC147) protein is Probable transcriptional regulatory protein FTM_1203.